The following is a 1714-amino-acid chain: uncharacterized protein (1714 aa).

Disordered stretches follow at residues S47–L70 and K584–K616. ATP contacts are provided by residues A607–S614 and A806–T813. Residues A607–K616 show a composition bias toward basic and acidic residues. Positions L793–S963 constitute a Helicase ATP-binding domain. Residues D913 to H916 carry the DEVH box motif. The disordered stretch occupies residues K1197–E1223. Residues K1199 to E1218 are compositionally biased toward basic and acidic residues. The Helicase C-terminal domain occupies A1237 to L1391.

This sequence belongs to the helicase family. SKI2 subfamily.

The protein localises to the nucleus. This is an uncharacterized protein from Caenorhabditis elegans.